The sequence spans 252 residues: Aspartate/glutamate leucyltransferase (252 aa).

The protein belongs to the R-transferase family. Bpt subfamily.

It localises to the cytoplasm. The enzyme catalyses N-terminal L-glutamyl-[protein] + L-leucyl-tRNA(Leu) = N-terminal L-leucyl-L-glutamyl-[protein] + tRNA(Leu) + H(+). The catalysed reaction is N-terminal L-aspartyl-[protein] + L-leucyl-tRNA(Leu) = N-terminal L-leucyl-L-aspartyl-[protein] + tRNA(Leu) + H(+). In terms of biological role, functions in the N-end rule pathway of protein degradation where it conjugates Leu from its aminoacyl-tRNA to the N-termini of proteins containing an N-terminal aspartate or glutamate. This chain is Aspartate/glutamate leucyltransferase, found in Polynucleobacter necessarius subsp. necessarius (strain STIR1).